The following is a 191-amino-acid chain: Nucleoside triphosphate pyrophosphatase (191 aa).

Aspartate 70 serves as the catalytic Proton acceptor.

This sequence belongs to the Maf family. The cofactor is a divalent metal cation.

The protein resides in the cytoplasm. The catalysed reaction is a ribonucleoside 5'-triphosphate + H2O = a ribonucleoside 5'-phosphate + diphosphate + H(+). It catalyses the reaction a 2'-deoxyribonucleoside 5'-triphosphate + H2O = a 2'-deoxyribonucleoside 5'-phosphate + diphosphate + H(+). Its function is as follows. Nucleoside triphosphate pyrophosphatase. May have a dual role in cell division arrest and in preventing the incorporation of modified nucleotides into cellular nucleic acids. The chain is Nucleoside triphosphate pyrophosphatase from Synechococcus sp. (strain WH7803).